The following is an 832-amino-acid chain: Prickle-like protein 1 (832 aa).

The 109-residue stretch at 14-122 (FGCQRSSTSD…TIKLLSRAVM (109 aa)) folds into the PET domain. 3 LIM zinc-binding domains span residues 124 to 188 (AVCE…ELLK), 189 to 249 (PRCS…LYAE), and 250 to 313 (YCET…EDIH). Residues 314-342 (ASDSSDSAFQSARSRDSRRSVRMGRSSRS) are disordered. Ser-315, Ser-592, and Ser-595 each carry phosphoserine. 2 disordered regions span residues 663–688 (HFEE…DNAL) and 765–832 (SSST…CIIS). Over residues 670-681 (RPHHHRHRRSRK) the composition is skewed to basic residues. Ser-684 is subject to Phosphoserine. The segment covering 798-815 (DLSSPASALPTPQFTQRT) has biased composition (polar residues). Positions 816 to 832 (TKSKKKKGHKGKNCIIS) are enriched in basic residues. Cys-829 is subject to Cysteine methyl ester. Cys-829 carries the S-farnesyl cysteine lipid modification. A propeptide spans 830–832 (IIS) (removed in mature form).

It belongs to the prickle / espinas / testin family. Interacts with REST.

It is found in the nucleus membrane. It localises to the cytoplasm. The protein localises to the cytosol. Involved in the planar cell polarity pathway that controls convergent extension during gastrulation and neural tube closure. Convergent extension is a complex morphogenetic process during which cells elongate, move mediolaterally, and intercalate between neighboring cells, leading to convergence toward the mediolateral axis and extension along the anteroposterior axis. Necessary for nuclear localization of REST. May serve as nuclear receptor. The chain is Prickle-like protein 1 (Prickle1) from Mus musculus (Mouse).